Here is a 220-residue protein sequence, read N- to C-terminus: Type-4 uracil-DNA glycosylase (220 aa).

Positions 14 and 17 each coordinate [4Fe-4S] cluster. Residues 41–43 (GEA), Phe-55, and Asn-82 each bind uracil. [4Fe-4S] cluster is bound by residues Cys-86 and Cys-102. His-164 is a uracil binding site.

It belongs to the uracil-DNA glycosylase (UDG) superfamily. Type 4 (UDGa) family.

The catalysed reaction is Hydrolyzes single-stranded DNA or mismatched double-stranded DNA and polynucleotides, releasing free uracil.. Its function is as follows. Removes uracil bases that are present in DNA as a result of either deamination of cytosine or misincorporation of dUMP instead of dTMP. The protein is Type-4 uracil-DNA glycosylase of Sulfurisphaera tokodaii (strain DSM 16993 / JCM 10545 / NBRC 100140 / 7) (Sulfolobus tokodaii).